The primary structure comprises 1057 residues: Carbamoyl phosphate synthase large chain (1057 aa).

Residues 1–401 form a carboxyphosphate synthetic domain region; it reads MPKRQDIETI…SLLKAIRSLE (401 aa). ATP contacts are provided by Arg129, Arg169, Gly175, Gly176, Lys208, Ile210, Glu215, Gly241, Ile242, His243, Gln284, and Glu298. The ATP-grasp 1 domain occupies 133–327; the sequence is RTLMNDLGVP…IAKLAAKIAI (195 aa). Residues Gln284, Glu298, and Asn300 each coordinate Mg(2+). Positions 284, 298, and 300 each coordinate Mn(2+). The oligomerization domain stretch occupies residues 402–546; it reads YGVHHLGLPN…YGTYEYENES (145 aa). Residues 547–929 are carbamoyl phosphate synthetic domain; that stretch reads VVTEKEKILV…ALFKGLTASG (383 aa). Residues 671–861 enclose the ATP-grasp 2 domain; it reads EALLHTIDVP…MAQLAMRAII (191 aa). 10 residues coordinate ATP: Arg707, Arg746, Leu748, Glu752, Gly777, Val778, His779, Ser780, Gln820, and Glu832. 3 residues coordinate Mg(2+): Gln820, Glu832, and Asn834. Mn(2+) contacts are provided by Gln820, Glu832, and Asn834. One can recognise an MGS-like domain in the interval 930-1057; that stretch reads MEVKDHGTVL…ESMTFTMKNM (128 aa). Residues 930–1057 form an allosteric domain region; the sequence is MEVKDHGTVL…ESMTFTMKNM (128 aa).

It belongs to the CarB family. Composed of two chains; the small (or glutamine) chain promotes the hydrolysis of glutamine to ammonia, which is used by the large (or ammonia) chain to synthesize carbamoyl phosphate. Tetramer of heterodimers (alpha,beta)4. Requires Mg(2+) as cofactor. Mn(2+) is required as a cofactor.

It carries out the reaction hydrogencarbonate + L-glutamine + 2 ATP + H2O = carbamoyl phosphate + L-glutamate + 2 ADP + phosphate + 2 H(+). The enzyme catalyses hydrogencarbonate + NH4(+) + 2 ATP = carbamoyl phosphate + 2 ADP + phosphate + 2 H(+). Its pathway is amino-acid biosynthesis; L-arginine biosynthesis; carbamoyl phosphate from bicarbonate: step 1/1. It participates in pyrimidine metabolism; UMP biosynthesis via de novo pathway; (S)-dihydroorotate from bicarbonate: step 1/3. Its function is as follows. Large subunit of the glutamine-dependent carbamoyl phosphate synthetase (CPSase). CPSase catalyzes the formation of carbamoyl phosphate from the ammonia moiety of glutamine, carbonate, and phosphate donated by ATP, constituting the first step of 2 biosynthetic pathways, one leading to arginine and/or urea and the other to pyrimidine nucleotides. The large subunit (synthetase) binds the substrates ammonia (free or transferred from glutamine from the small subunit), hydrogencarbonate and ATP and carries out an ATP-coupled ligase reaction, activating hydrogencarbonate by forming carboxy phosphate which reacts with ammonia to form carbamoyl phosphate. This is Carbamoyl phosphate synthase large chain from Staphylococcus saprophyticus subsp. saprophyticus (strain ATCC 15305 / DSM 20229 / NCIMB 8711 / NCTC 7292 / S-41).